The following is an 852-amino-acid chain: MVQKSRNGGVYPGTSGEKKLKVGFVGLDPGAPDSTRDGALLIAGSEAPKRGSVLSKPRTGGAGAGKPPKRNAFYRKLQNFLYNVLERPRGWAFIYHAYVFLLVFSCLVLSVFSTIKEYEKSSEGALYILEIVTIVVFGVEYFVRIWAAGCCCRYRGWRGRLKFARKPFCVIDIMVLIASIAVLAAGSQGNVFATSALRSLRFLQILRMIRMDRRGGTWKLLGSVVYAHSKELVTAWYIGFLCLILASFLVYLAEKGENDHFDTYADALWWGLITLTTIGYGDKYPQTWNGRLLAATFTLIGVSFFALPAGILGSGFALKVQEQHRQKHFEKRRNPAAGLIQSAWRFYATNLSRTDLHSTWQYYERTVTVPMISSQTQTYGASRLIPPLNQLEMLRNLKSKSGLTFRKEPQPEPSPSQKVSLKDRVFSSPRGVAAKGKGSPQAQTVRRSPSADQSLDDSPSKVPKSWSFGDRSRARQAFRIKGAASRQNSEEASLPGEDIVEDNKSCNCEFVTEDLTPGLKVSIRAVCVMRFLVSKRKFKESLRPYDVMDVIEQYSAGHLDMLSRIKSLQSRVDQIVGRGPTITDKDRTKGPAETELPEDPSMMGRLGKVEKQVLSMEKKLDFLVSIYTQRMGIPPAETEAYFGAKEPEPAPPYHSPEDSRDHADKHGCIIKIVRSTSSTGQRKYAAPPVMPPAECPPSTSWQQSHQRHGTSPVGDHGSLVRIPPPPAHERSLSAYSGGNRASTEFLRLEGTPACRPSEAALRDSDTSISIPSVDHEELERSFSGFSISQSKENLNALASCYAAVAPCAKVRPYIAEGESDTDSDLCTPCGPPPRSATGEGPFGDVAWAGPRK.

Topologically, residues 1–90 are cytoplasmic; it reads MVQKSRNGGV…LYNVLERPRG (90 aa). Ser52 carries the post-translational modification Phosphoserine; by PKA. Residues 91–113 form a helical membrane-spanning segment; that stretch reads WAFIYHAYVFLLVFSCLVLSVFS. Residues 114 to 123 are Extracellular-facing; that stretch reads TIKEYEKSSE. Residues 124 to 145 traverse the membrane as a helical segment; the sequence is GALYILEIVTIVVFGVEYFVRI. Residues 146–163 lie on the Cytoplasmic side of the membrane; it reads WAAGCCCRYRGWRGRLKF. Residues 164–183 traverse the membrane as a helical segment; the sequence is ARKPFCVIDIMVLIASIAVL. Over 184 to 196 the chain is Extracellular; that stretch reads AAGSQGNVFATSA. Residues 197–215 traverse the membrane as a helical; Voltage-sensor segment; that stretch reads LRSLRFLQILRMIRMDRRG. Residue Arg214 coordinates a 1,2-diacyl-sn-glycero-3-phospho-(1D-myo-inositol-4,5-bisphosphate). Topologically, residues 216 to 227 are cytoplasmic; sequence GTWKLLGSVVYA. The mediates interaction with SLC5A3 stretch occupies residues 222-323; sequence GSVVYAHSKE…SGFALKVQEQ (102 aa). The helical transmembrane segment at 228–253 threads the bilayer; the sequence is HSKELVTAWYIGFLCLILASFLVYLA. Lys230 provides a ligand contact to a 1,2-diacyl-sn-glycero-3-phospho-(1D-myo-inositol-4,5-bisphosphate). At 254–263 the chain is on the extracellular side; it reads EKGENDHFDT. The pore-forming intramembrane region spans 264–276; that stretch reads YADALWWGLITLT. Positions 277-282 match the Selectivity filter motif; that stretch reads TIGYGD. Topologically, residues 277-287 are extracellular; the sequence is TIGYGDKYPQT. Residues 288–314 traverse the membrane as a helical segment; the sequence is WNGRLLAATFTLIGVSFFALPAGILGS. Residues 315-852 are Cytoplasmic-facing; the sequence is GFALKVQEQH…GDVAWAGPRK (538 aa). A mediates interaction with calmodulin region spans residues 317–522; that stretch reads ALKVQEQHRQ…EDLTPGLKVS (206 aa). Lys327 is a binding site for a 1,2-diacyl-sn-glycero-3-phospho-(1D-myo-inositol-4,5-bisphosphate). Positions 404 to 469 are disordered; sequence TFRKEPQPEP…SKVPKSWSFG (66 aa). Polar residues predominate over residues 440–457; it reads PQAQTVRRSPSADQSLDD. Phosphoserine is present on residues Ser448, Ser450, Ser454, Ser458, Ser460, and Ser489. Disordered stretches follow at residues 579–601, 643–662, and 672–718; these read GPTI…EDPS, GAKE…SRDH, and IVRS…DHGS. Over residues 583–592 the composition is skewed to basic and acidic residues; that stretch reads TDKDRTKGPA. Position 655 is a phosphoserine (Ser655). Residues Ser781 and Ser783 each carry the phosphoserine modification. The disordered stretch occupies residues 818–852; that stretch reads ESDTDSDLCTPCGPPPRSATGEGPFGDVAWAGPRK.

Belongs to the potassium channel family. KQT (TC 1.A.1.15) subfamily. Kv7.2/KCNQ2 sub-subfamily. Heterotetramer with KCNQ3; forms heterotetrameric M-channel responsible for the M-current. Homotetrameric; forms a functional homotetrameric channel resulting in the expression of a small M-current. Interacts with calmodulin; the interaction is calcium-independent, constitutive and participates in the proper assembly of a functional M-channel. May associate with KCNE2. Interacts with IQCJ-SCHIP1. Interacts (via the pore module) with SLC5A3/SMIT1; forms a coregulatory complex that alters ion selectivity, voltage dependence and gating kinetics of the channel. Interacts with AKAP5; the interaction may help KCNQ2 channel complex to retain calcium-bound calmodulin. In terms of processing, KCNQ2/KCNQ3 heteromeric current can be increased by intracellular cyclic AMP, an effect that depends on phosphorylation of Ser-52 in the N-terminal region. Post-translationally, KCNQ2/KCNQ3 are ubiquitinated by NEDD4L. Ubiquitination leads to protein degradation. Degradation induced by NEDD4L is inhibited by USP36. As to expression, expressed in brain and sympathetic ganglia. In brain, expressed in cortex, hippocampus, and cerebellum. In sympathetic ganglia, expressed at lower levels in celiac ganglia and superior mesenteric ganglia than in superior cervical ganglia.

It is found in the cell membrane. It carries out the reaction K(+)(in) = K(+)(out). The enzyme catalyses Rb(+)(in) = Rb(+)(out). It catalyses the reaction Cs(+)(in) = Cs(+)(out). The catalysed reaction is Na(+)(in) = Na(+)(out). With respect to regulation, phosphatidylinositol-4,5-bisphosphate (PIP2) potentiates the activation of KCNQ channels by enhancing the electro-mechanical coupling of the voltage-sensing domain (VSD) and the pore-forming domain (PD). In the closed state of the channel, PIP2 is anchored at the S2-S3 loop; upon channel activation, PIP2 interacts with the S4-S5 linker and is involved in channel gating. Calcium suppresses KCNQ2 and KCNQ2-KCNQ3 channel currents, with calcium-bound calmodulin inducing a change in channel configuration which leads to the reduction of channel affinity for PIP2 and subsequent current suppression. In terms of biological role, pore-forming subunit of the voltage-gated potassium (Kv) M-channel which is responsible for the M-current, a key controller of neuronal excitability. M-channel is composed of pore-forming subunits KCNQ2 and KCNQ3 assembled as heterotetramers. The native M-current has a slowly activating and deactivating potassium conductance which plays a critical role in determining the subthreshold electrical excitability of neurons as well as the responsiveness to synaptic inputs. M-channel is selectively permeable in vitro to other cations besides potassium, in decreasing order of affinity K(+) &gt; Rb(+) &gt; Cs(+) &gt; Na(+). M-channel association with SLC5A3/SMIT1 alters channel ion selectivity, increasing Na(+) and Cs(+) permeation relative to K(+). Suppressed by activation of the muscarinic acetylcholine receptor CHRM1. This is Potassium voltage-gated channel subfamily KQT member 2 from Rattus norvegicus (Rat).